Consider the following 340-residue polypeptide: Tryptophan--tRNA ligase (340 aa).

Residues 11–13 (RPT) and 19–20 (GH) each bind ATP. A 'HIGH' region motif is present at residues 12-20 (PTGKLHLGH). Asp-140 contributes to the L-tryptophan binding site. Residues 152 to 154 (GND), Leu-194, and 202 to 206 (KMSKS) contribute to the ATP site. The short motif at 202–206 (KMSKS) is the 'KMSKS' region element.

Belongs to the class-I aminoacyl-tRNA synthetase family. Homodimer.

It localises to the cytoplasm. The enzyme catalyses tRNA(Trp) + L-tryptophan + ATP = L-tryptophyl-tRNA(Trp) + AMP + diphosphate + H(+). Functionally, catalyzes the attachment of tryptophan to tRNA(Trp). In Streptococcus pyogenes serotype M1, this protein is Tryptophan--tRNA ligase.